We begin with the raw amino-acid sequence, 94 residues long: uncharacterized protein (94 aa).

A signal peptide spans 1-26 (MNDQRDQAVPWATGLAVAGFVAAVIA). Helical transmembrane passes span 42-62 (LLAV…LWGW) and 71-91 (FVLG…ALTL).

It localises to the cell membrane. This is an uncharacterized protein from Mycobacterium tuberculosis (strain CDC 1551 / Oshkosh).